The primary structure comprises 191 residues: Signal peptidase IB (191 aa).

Topologically, residues 1–7 are cytoplasmic; sequence MKKEILE. The chain crosses the membrane as a helical span at residues 8-28; it reads WIISIAVAFVILFIVGKFIVT. Topologically, residues 29-191 are extracellular; the sequence is PYTIKGESMD…HNFNPENTKN (163 aa). Catalysis depends on residues S36 and K77.

Belongs to the peptidase S26 family.

The protein localises to the cell membrane. The enzyme catalyses Cleavage of hydrophobic, N-terminal signal or leader sequences from secreted and periplasmic proteins.. Essential for cell viability. The chain is Signal peptidase IB (spsB) from Staphylococcus aureus (strain COL).